The sequence spans 161 residues: Small heat shock protein ibp (161 aa).

Positions 35–150 (EKPLSDTPAY…KPKKIFINIP (116 aa)) constitute a sHSP domain.

It belongs to the small heat shock protein (HSP20) family.

The protein is Small heat shock protein ibp (ibp) of Buchnera aphidicola subsp. Schizaphis graminum (strain Sg).